The primary structure comprises 277 residues: Alpha-ketoglutarate-dependent dioxygenase tstK (277 aa).

It belongs to the asaB hydroxylase/desaturase family.

It carries out the reaction 2-[(1R,8S,14R,15R)-11-hydroxy-14,15-bis[(6E)-oct-6-en-1-yl]-3,5,9-trioxo-4,10-dioxatetracyclo[9.4.0.0(2,6).0(8,12)]pentadeca-2(6),12-dien-8-yl]acetate + 3 2-oxoglutarate + 3 O2 = phomoidride A + 3 succinate + 3 CO2 + H2O. In terms of biological role, alpha-ketoglutarate-dependent dioxygenase; part of the gene cluster that mediates the biosynthesis of the antihypercholesterolemic agents phomoidrides which are dimeric anhydrides. Within the pathway, tstK is responsible for the iterative oxidation necessary to convert prephomoidride to phomoidride A. The pathway begins with the highly reducing polyketide synthase tstiA that catalyzes the formation of a C12-fatty acyl-ACP, starting from one acetate and 5 malonate units. The hydrolase tstM is involved in the release of the C12-fatty acyl chain from phiA. The alkylcitrate synthase (ACS) tstJ and the alkylcitrate dehydratase (ACDH) tstI then give rise to decarboxylated monomeric anhydrides by coupling the C12-fatty acyl chain with oxalacetic acid. The cyclase tstC is responsible for the dimerization of the monomeric anhydrides which leads to the production of prephomoidride that contains the characteristic bicyclo[4.3.1]deca-1,6-diene system of phomoidrides. Iterative oxidation catalyzed by the alpha-ketoglutarate-dependent dioxygenase tstK produced then phomoidride A. Finally, the methyltransferase tstE converts phomoidride A to phomoidride B via an acetalization reaction. The phosphatidylethanolamine-binding protein tstB and tstN are not essential for dimerization and their functions have still to be determined. The polypeptide is Alpha-ketoglutarate-dependent dioxygenase tstK (Talaromyces stipitatus (strain ATCC 10500 / CBS 375.48 / QM 6759 / NRRL 1006) (Penicillium stipitatum)).